The chain runs to 198 residues: Protein GrpE (198 aa).

It belongs to the GrpE family. In terms of assembly, homodimer.

The protein resides in the cytoplasm. Functionally, participates actively in the response to hyperosmotic and heat shock by preventing the aggregation of stress-denatured proteins, in association with DnaK and GrpE. It is the nucleotide exchange factor for DnaK and may function as a thermosensor. Unfolded proteins bind initially to DnaJ; upon interaction with the DnaJ-bound protein, DnaK hydrolyzes its bound ATP, resulting in the formation of a stable complex. GrpE releases ADP from DnaK; ATP binding to DnaK triggers the release of the substrate protein, thus completing the reaction cycle. Several rounds of ATP-dependent interactions between DnaJ, DnaK and GrpE are required for fully efficient folding. In Actinobacillus pleuropneumoniae serotype 3 (strain JL03), this protein is Protein GrpE.